A 235-amino-acid chain; its full sequence is Exotoxin type C (235 aa).

Positions 1-27 are cleaved as a signal peptide; the sequence is MKKINIIKIVFIITVILISTISPIIKS. The Zn(2+) site is built by His194, His228, and Asp230.

The protein belongs to the staphylococcal/streptococcal toxin family.

Functionally, superantigen that acts as a causative agent of the symptoms associated with scarlet fever. Has been associated with streptococcal toxic shock-like disease and may play a role in the early events of rheumatic fever. Superantigens cross-link major histocompatibility complex (MHC) class II and T-cell receptor (TCR) molecules, resulting in an overstimulation of T-cells associated with a massive release of pyrogenic and inflammatory cytokines. This is Exotoxin type C from Streptococcus pyogenes serotype M18 (strain MGAS8232).